A 157-amino-acid chain; its full sequence is MGVFVFDDEYVSTVAPPKLYKALAKDADEIVPKVIKEAQGVEIIEGNGGPGTIKKLSILEDGKTNYVLHKLDAVDEANFGYNYSLVGGPGLHESLEKVAFETIILAGSDGGSIVKISVKYHTKGDAALSDAVRDETKAKGTGLIKAIEGYVLANPGY.

It belongs to the BetVI family.

The protein is ABA-responsive protein ABR17 of Pisum sativum (Garden pea).